We begin with the raw amino-acid sequence, 145 residues long: D-aminoacyl-tRNA deacylase (145 aa).

Residues 137 to 138 carry the Gly-cisPro motif, important for rejection of L-amino acids motif; that stretch reads GP.

It belongs to the DTD family. As to quaternary structure, homodimer.

Its subcellular location is the cytoplasm. The catalysed reaction is glycyl-tRNA(Ala) + H2O = tRNA(Ala) + glycine + H(+). It carries out the reaction a D-aminoacyl-tRNA + H2O = a tRNA + a D-alpha-amino acid + H(+). Functionally, an aminoacyl-tRNA editing enzyme that deacylates mischarged D-aminoacyl-tRNAs. Also deacylates mischarged glycyl-tRNA(Ala), protecting cells against glycine mischarging by AlaRS. Acts via tRNA-based rather than protein-based catalysis; rejects L-amino acids rather than detecting D-amino acids in the active site. By recycling D-aminoacyl-tRNA to D-amino acids and free tRNA molecules, this enzyme counteracts the toxicity associated with the formation of D-aminoacyl-tRNA entities in vivo and helps enforce protein L-homochirality. The chain is D-aminoacyl-tRNA deacylase from Shewanella pealeana (strain ATCC 700345 / ANG-SQ1).